The primary structure comprises 322 residues: Ribosomal RNA small subunit methyltransferase H (322 aa).

Residues 43–45 (GGY), aspartate 60, phenylalanine 86, aspartate 104, and glutamine 111 each bind S-adenosyl-L-methionine.

This sequence belongs to the methyltransferase superfamily. RsmH family.

The protein resides in the cytoplasm. It carries out the reaction cytidine(1402) in 16S rRNA + S-adenosyl-L-methionine = N(4)-methylcytidine(1402) in 16S rRNA + S-adenosyl-L-homocysteine + H(+). Its function is as follows. Specifically methylates the N4 position of cytidine in position 1402 (C1402) of 16S rRNA. The polypeptide is Ribosomal RNA small subunit methyltransferase H (Caulobacter sp. (strain K31)).